Reading from the N-terminus, the 240-residue chain is Keratinocyte-associated protein 3 (240 aa).

4 consecutive transmembrane segments (helical) span residues 21 to 41 (VGLA…VLHG), 63 to 83 (VISV…LLAS), 95 to 115 (LLTL…GLLL), and 163 to 183 (ALAL…LSGY).

Belongs to the TMEM54 family.

It is found in the membrane. The polypeptide is Keratinocyte-associated protein 3 (Krtcap3) (Mus musculus (Mouse)).